A 285-amino-acid polypeptide reads, in one-letter code: Cytosolic Fe-S cluster assembly factor CFD1 (285 aa).

30-37 is a binding site for ATP; the sequence is GKGGVGKS. [4Fe-4S] cluster is bound by residues C206 and C209.

It belongs to the Mrp/NBP35 ATP-binding proteins family. NUBP2/CFD1 subfamily. Heterotetramer of 2 NBP35 and 2 CFD1 chains. Requires [4Fe-4S] cluster as cofactor.

It is found in the cytoplasm. In terms of biological role, component of the cytosolic iron-sulfur (Fe/S) protein assembly (CIA) machinery. Required for maturation of extramitochondrial Fe-S proteins. The NBP35-CFD1 heterotetramer forms a Fe-S scaffold complex, mediating the de novo assembly of an Fe-S cluster and its transfer to target apoproteins. Required for biogenesis and export of both ribosomal subunits, which may reflect a role in assembly of the Fe/S clusters in RLI1, a protein which performs rRNA processing and ribosome export. This is Cytosolic Fe-S cluster assembly factor CFD1 from Candida glabrata (strain ATCC 2001 / BCRC 20586 / JCM 3761 / NBRC 0622 / NRRL Y-65 / CBS 138) (Yeast).